The chain runs to 578 residues: Zinc finger protein with KRAB and SCAN domains 8 (578 aa).

A disordered region spans residues 1 to 20; sequence MAEESRKPSAPSPPDQTPEE. S12 carries the post-translational modification Phosphoserine. K26 is covalently cross-linked (Glycyl lysine isopeptide (Lys-Gly) (interchain with G-Cter in SUMO2)). An SCAN box domain is found at 51-133; sequence RLRFRQLCYQ…TLLEDLERQI (83 aa). Positions 158–205 are disordered; it reads ASAPEPPNTQLQSEATQHKSPVPQESQERAMSTSQSPTRSQKGSSGDQ. The segment covering 165–205 has biased composition (polar residues); that stretch reads NTQLQSEATQHKSPVPQESQERAMSTSQSPTRSQKGSSGDQ. Residues K176 and K199 each participate in a glycyl lysine isopeptide (Lys-Gly) (interchain with G-Cter in SUMO2) cross-link. S201 carries the phosphoserine modification. The KRAB domain maps to 220 to 316; the sequence is EKIEDMAVSL…GRLERQRGNP (97 aa). Glycyl lysine isopeptide (Lys-Gly) (interchain with G-Cter in SUMO2) cross-links involve residues K221, K272, and K288. 2 consecutive C2H2-type zinc fingers follow at residues 322 to 344 and 350 to 372; these read HKCD…WRIH and YQCN…QDIH. Glycyl lysine isopeptide (Lys-Gly) (interchain with G-Cter in SUMO2) cross-links involve residues K374 and K376. C2H2-type zinc fingers lie at residues 378-400, 406-428, 434-456, 462-484, 490-512, 518-540, and 546-568; these read YHCK…QRIH, YQCN…QRIH, YECN…QRIH, YECD…QRSH, YKCN…QRIH, and YKCK…LRIH. Residues K413 and K441 each participate in a glycyl lysine isopeptide (Lys-Gly) (interchain with G-Cter in SUMO2) cross-link. K502 is covalently cross-linked (Glycyl lysine isopeptide (Lys-Gly) (interchain with G-Cter in SUMO2)). K572 is covalently cross-linked (Glycyl lysine isopeptide (Lys-Gly) (interchain with G-Cter in SUMO2)).

This sequence belongs to the krueppel C2H2-type zinc-finger protein family.

The protein resides in the nucleus. May be involved in transcriptional regulation. The chain is Zinc finger protein with KRAB and SCAN domains 8 (ZKSCAN8) from Pan troglodytes (Chimpanzee).